Consider the following 164-residue polypeptide: Pathogenesis-related protein PRB1-2 (164 aa).

The first 24 residues, 1-24, serve as a signal peptide directing secretion; the sequence is MQTPKLAILLALAMAAAMVNLSQA. Gln25 bears the Pyrrolidone carboxylic acid mark. Residues 34–152 enclose the SCP domain; it reads PHNAARSAVG…NRGVFITCNY (119 aa). 3 disulfide bridges follow: Cys68–Cys140, Cys113–Cys119, and Cys135–Cys150.

This sequence belongs to the CRISP family.

Its function is as follows. Probably involved in the defense reaction of plants against pathogens. The chain is Pathogenesis-related protein PRB1-2 from Hordeum vulgare (Barley).